We begin with the raw amino-acid sequence, 639 residues long: Chaperone protein HtpG (639 aa).

The a; substrate-binding stretch occupies residues 1–343 (MEATATKEHL…SNDLPLNVSR (343 aa)). The segment at 344–564 (EILQESKDIE…THDMSGNLER (221 aa)) is b. The c stretch occupies residues 565-639 (LLKSAGQKVT…QLFLSTGSKE (75 aa)).

This sequence belongs to the heat shock protein 90 family. Homodimer.

It localises to the cytoplasm. Its function is as follows. Molecular chaperone. Has ATPase activity. The sequence is that of Chaperone protein HtpG from Nitrosospira multiformis (strain ATCC 25196 / NCIMB 11849 / C 71).